The chain runs to 131 residues: Small ribosomal subunit protein uS8 (131 aa).

The protein belongs to the universal ribosomal protein uS8 family. Part of the 30S ribosomal subunit. Contacts proteins S5 and S12.

In terms of biological role, one of the primary rRNA binding proteins, it binds directly to 16S rRNA central domain where it helps coordinate assembly of the platform of the 30S subunit. The sequence is that of Small ribosomal subunit protein uS8 from Erythrobacter litoralis (strain HTCC2594).